Reading from the N-terminus, the 393-residue chain is Chorismate synthase (393 aa).

NADP(+) is bound by residues Arg-40 and Arg-46. FMN is bound by residues 129–131, 250–251, Gly-301, 316–320, and Arg-342; these read RAS, QA, and KPIST.

It belongs to the chorismate synthase family. In terms of assembly, homotetramer. The cofactor is FMNH2.

It carries out the reaction 5-O-(1-carboxyvinyl)-3-phosphoshikimate = chorismate + phosphate. The protein operates within metabolic intermediate biosynthesis; chorismate biosynthesis; chorismate from D-erythrose 4-phosphate and phosphoenolpyruvate: step 7/7. In terms of biological role, catalyzes the anti-1,4-elimination of the C-3 phosphate and the C-6 proR hydrogen from 5-enolpyruvylshikimate-3-phosphate (EPSP) to yield chorismate, which is the branch point compound that serves as the starting substrate for the three terminal pathways of aromatic amino acid biosynthesis. This reaction introduces a second double bond into the aromatic ring system. This chain is Chorismate synthase, found in Acidobacterium capsulatum (strain ATCC 51196 / DSM 11244 / BCRC 80197 / JCM 7670 / NBRC 15755 / NCIMB 13165 / 161).